The primary structure comprises 246 residues: 1-(5-phosphoribosyl)-5-[(5-phosphoribosylamino)methylideneamino] imidazole-4-carboxamide isomerase (246 aa).

Residue aspartate 7 is the Proton acceptor of the active site. Residue aspartate 129 is the Proton donor of the active site.

This sequence belongs to the HisA/HisF family.

The protein resides in the cytoplasm. The enzyme catalyses 1-(5-phospho-beta-D-ribosyl)-5-[(5-phospho-beta-D-ribosylamino)methylideneamino]imidazole-4-carboxamide = 5-[(5-phospho-1-deoxy-D-ribulos-1-ylimino)methylamino]-1-(5-phospho-beta-D-ribosyl)imidazole-4-carboxamide. Its pathway is amino-acid biosynthesis; L-histidine biosynthesis; L-histidine from 5-phospho-alpha-D-ribose 1-diphosphate: step 4/9. In Shewanella sediminis (strain HAW-EB3), this protein is 1-(5-phosphoribosyl)-5-[(5-phosphoribosylamino)methylideneamino] imidazole-4-carboxamide isomerase.